The primary structure comprises 292 residues: RNA 5'-monophosphate methyltransferase (292 aa).

Positions 1–20 are disordered; sequence MAVPTELHGGSVKETAAEKE. S-adenosyl-L-methionine contacts are provided by residues R46, N76, D110, 135 to 136, and M164; that span reads DF. One can recognise a Bin3-type SAM domain in the interval 53-274; it reads ELLRQLFPES…KQTIETHPIP (222 aa).

This sequence belongs to the methyltransferase superfamily. Interacts with DICER1; the interaction may be mediated by RNA.

It localises to the cytoplasm. It carries out the reaction a 5'-end 5'-phospho-ribonucleoside-RNA + S-adenosyl-L-methionine = a 5'-end (5'-methylphospho)-ribonucleoside-RNA + S-adenosyl-L-homocysteine. The catalysed reaction is a 5'-end 5'-phospho-ribonucleoside-RNA + 2 S-adenosyl-L-methionine = a 5'-end (5'-bismethylphospho)-ribonucleoside-RNA + 2 S-adenosyl-L-homocysteine. In terms of biological role, O-methyltransferase that specifically monomethylates 5'-monophosphate of cytoplasmic histidyl tRNA (tRNA(His)), acting as a capping enzyme by protecting tRNA(His) from cleavage by DICER1. Also able, with less efficiently, to methylate the 5' monophosphate of a subset of pre-miRNAs, acting as a negative regulator of miRNA processing. The 5' monophosphate of pre-miRNAs is recognized by DICER1 and is required for pre-miRNAs processing: methylation at this position reduces the processing of pre-miRNAs by DICER1. Was also reported to mediate dimethylation of pre-miR-145; however dimethylation cannot be reproduced by another group which observes a monomethylation of pre-miR-145. The protein is RNA 5'-monophosphate methyltransferase (BCDIN3D) of Pongo abelii (Sumatran orangutan).